A 342-amino-acid polypeptide reads, in one-letter code: 4-hydroxy-2-oxovalerate aldolase (342 aa).

A Pyruvate carboxyltransferase domain is found at 7–259; that stretch reads ILVHDMSLRD…CTGVDLGRIQ (253 aa). 15–16 provides a ligand contact to substrate; that stretch reads RD. Mn(2+) is bound at residue Asp16. His19 acts as the Proton acceptor in catalysis. 2 residues coordinate substrate: Ser169 and His198. Mn(2+) contacts are provided by His198 and His200. Residue Tyr289 participates in substrate binding.

It belongs to the 4-hydroxy-2-oxovalerate aldolase family.

The enzyme catalyses (S)-4-hydroxy-2-oxopentanoate = acetaldehyde + pyruvate. The chain is 4-hydroxy-2-oxovalerate aldolase from Alkalilimnicola ehrlichii (strain ATCC BAA-1101 / DSM 17681 / MLHE-1).